The sequence spans 309 residues: Polyprenal reductase (309 aa).

The next 7 membrane-spanning stretches (helical) occupy residues 12–32 (LPLY…FTLI), 72–92 (FYAI…SLIY), 114–134 (IPPI…LHVA), 151–171 (MNLF…ISIM), 184–204 (LHVS…LFWI), 242–262 (LVSC…FLVI), and 270–290 (FIIM…HSWY).

Belongs to the steroid 5-alpha reductase family. Polyprenal reductase subfamily.

It localises to the endoplasmic reticulum membrane. The enzyme catalyses a di-trans,poly-cis-dolichal + NADP(+) = a di-trans,poly-cis-polyprenal + NADPH + H(+). The protein operates within protein modification; protein glycosylation. Its function is as follows. Plays a key role in early steps of protein N-linked glycosylation by being involved in the conversion of polyprenol into dolichol. Acts as a polyprenal reductase that mediates the reduction of polyprenal into dolichal in a NADP-dependent mechanism. Dolichols are required for the synthesis of dolichol-linked monosaccharides and the oligosaccharide precursor used for N-glycosylation. This chain is Polyprenal reductase, found in Caenorhabditis elegans.